A 138-amino-acid polypeptide reads, in one-letter code: Putative pre-16S rRNA nuclease (138 aa).

It belongs to the YqgF nuclease family.

It is found in the cytoplasm. Functionally, could be a nuclease involved in processing of the 5'-end of pre-16S rRNA. The protein is Putative pre-16S rRNA nuclease of Listeria monocytogenes serovar 1/2a (strain ATCC BAA-679 / EGD-e).